The chain runs to 349 residues: Methylthioribose-1-phosphate isomerase (349 aa).

Substrate is bound by residues 49–51 (RGA), Arg93, and Gln201. Catalysis depends on Asp242, which acts as the Proton donor. Residue 252–253 (NK) participates in substrate binding.

The protein belongs to the EIF-2B alpha/beta/delta subunits family. MtnA subfamily.

The catalysed reaction is 5-(methylsulfanyl)-alpha-D-ribose 1-phosphate = 5-(methylsulfanyl)-D-ribulose 1-phosphate. The protein operates within amino-acid biosynthesis; L-methionine biosynthesis via salvage pathway; L-methionine from S-methyl-5-thio-alpha-D-ribose 1-phosphate: step 1/6. Its function is as follows. Catalyzes the interconversion of methylthioribose-1-phosphate (MTR-1-P) into methylthioribulose-1-phosphate (MTRu-1-P). In Petrotoga mobilis (strain DSM 10674 / SJ95), this protein is Methylthioribose-1-phosphate isomerase.